A 301-amino-acid chain; its full sequence is Homoserine kinase (301 aa).

An ATP-binding site is contributed by 86–96; it reads PLARGLGSSAT.

The protein belongs to the GHMP kinase family. Homoserine kinase subfamily.

The protein resides in the cytoplasm. It carries out the reaction L-homoserine + ATP = O-phospho-L-homoserine + ADP + H(+). It functions in the pathway amino-acid biosynthesis; L-threonine biosynthesis; L-threonine from L-aspartate: step 4/5. Catalyzes the ATP-dependent phosphorylation of L-homoserine to L-homoserine phosphate. This chain is Homoserine kinase, found in Thermosynechococcus vestitus (strain NIES-2133 / IAM M-273 / BP-1).